Reading from the N-terminus, the 318-residue chain is DNA-directed RNA polymerase subunit alpha 2 (318 aa).

Positions 1-227 (MALENLLHPT…NQLRNIVDIE (227 aa)) are alpha N-terminal domain (alpha-NTD). The segment at 242–318 (INPILLKHVE…TLIENWPQDL (77 aa)) is alpha C-terminal domain (alpha-CTD).

The protein belongs to the RNA polymerase alpha chain family. Homodimer. The RNAP catalytic core consists of 2 alpha, 1 beta, 1 beta' and 1 omega subunit. When a sigma factor is associated with the core the holoenzyme is formed, which can initiate transcription.

It catalyses the reaction RNA(n) + a ribonucleoside 5'-triphosphate = RNA(n+1) + diphosphate. Its function is as follows. DNA-dependent RNA polymerase catalyzes the transcription of DNA into RNA using the four ribonucleoside triphosphates as substrates. The sequence is that of DNA-directed RNA polymerase subunit alpha 2 from Francisella tularensis subsp. novicida (strain U112).